Reading from the N-terminus, the 484-residue chain is Glutamate--tRNA ligase (484 aa).

The short motif at 11 to 21 (PSPTGYLHIGN) is the 'HIGH' region element. Positions 252–256 (KLSKR) match the 'KMSKS' region motif. Lys-255 contacts ATP.

The protein belongs to the class-I aminoacyl-tRNA synthetase family. Glutamate--tRNA ligase type 1 subfamily. In terms of assembly, monomer.

The protein localises to the cytoplasm. It catalyses the reaction tRNA(Glu) + L-glutamate + ATP = L-glutamyl-tRNA(Glu) + AMP + diphosphate. Catalyzes the attachment of glutamate to tRNA(Glu) in a two-step reaction: glutamate is first activated by ATP to form Glu-AMP and then transferred to the acceptor end of tRNA(Glu). The chain is Glutamate--tRNA ligase from Staphylococcus aureus (strain Newman).